The primary structure comprises 1073 residues: Carbamoyl phosphate synthase large chain (1073 aa).

Positions 2 to 403 (PKRTDIKSIL…SLQKALRGLE (402 aa)) are carboxyphosphate synthetic domain. Arginine 129, arginine 169, glycine 175, glycine 176, glutamate 208, leucine 210, glutamate 215, glycine 241, isoleucine 242, histidine 243, glutamine 285, and glutamate 299 together coordinate ATP. The region spanning 133–328 (DVAMKKIGLE…IAKVAAKLAV (196 aa)) is the ATP-grasp 1 domain. Residues glutamine 285, glutamate 299, and asparagine 301 each coordinate Mg(2+). Positions 285, 299, and 301 each coordinate Mn(2+). An oligomerization domain region spans residues 404-553 (VGATGFDPKV…YSTYEEECEA (150 aa)). A carbamoyl phosphate synthetic domain region spans residues 554–936 (NPSTDREKIM…AFAKAQLGSN (383 aa)). One can recognise an ATP-grasp 2 domain in the interval 679 to 870 (QHAVERLKLK…LAKVAARVMA (192 aa)). Arginine 715, histidine 754, leucine 756, glutamate 761, glycine 786, valine 787, histidine 788, serine 789, glutamine 829, and glutamate 841 together coordinate ATP. Residues glutamine 829, glutamate 841, and asparagine 843 each coordinate Mg(2+). Residues glutamine 829, glutamate 841, and asparagine 843 each contribute to the Mn(2+) site. The MGS-like domain maps to 937–1073 (STMKKHGRAL…SVQEMHAQIK (137 aa)). Residues 937–1073 (STMKKHGRAL…SVQEMHAQIK (137 aa)) form an allosteric domain region.

This sequence belongs to the CarB family. In terms of assembly, composed of two chains; the small (or glutamine) chain promotes the hydrolysis of glutamine to ammonia, which is used by the large (or ammonia) chain to synthesize carbamoyl phosphate. Tetramer of heterodimers (alpha,beta)4. It depends on Mg(2+) as a cofactor. The cofactor is Mn(2+).

It catalyses the reaction hydrogencarbonate + L-glutamine + 2 ATP + H2O = carbamoyl phosphate + L-glutamate + 2 ADP + phosphate + 2 H(+). The catalysed reaction is hydrogencarbonate + NH4(+) + 2 ATP = carbamoyl phosphate + 2 ADP + phosphate + 2 H(+). The protein operates within amino-acid biosynthesis; L-arginine biosynthesis; carbamoyl phosphate from bicarbonate: step 1/1. Its pathway is pyrimidine metabolism; UMP biosynthesis via de novo pathway; (S)-dihydroorotate from bicarbonate: step 1/3. In terms of biological role, large subunit of the glutamine-dependent carbamoyl phosphate synthetase (CPSase). CPSase catalyzes the formation of carbamoyl phosphate from the ammonia moiety of glutamine, carbonate, and phosphate donated by ATP, constituting the first step of 2 biosynthetic pathways, one leading to arginine and/or urea and the other to pyrimidine nucleotides. The large subunit (synthetase) binds the substrates ammonia (free or transferred from glutamine from the small subunit), hydrogencarbonate and ATP and carries out an ATP-coupled ligase reaction, activating hydrogencarbonate by forming carboxy phosphate which reacts with ammonia to form carbamoyl phosphate. The polypeptide is Carbamoyl phosphate synthase large chain (Escherichia coli O6:H1 (strain CFT073 / ATCC 700928 / UPEC)).